The chain runs to 259 residues: Dickkopf-related protein 2 (259 aa).

Positions 1-33 (MAALMRVKDSSRCLLLLAAVLMVESSQLGSSRA) are cleaved as a signal peptide. Residues 42–70 (LGGETPAQSANRSAGMNQGLAFGGSKKGK) form a disordered region. The span at 47–57 (PAQSANRSAGM) shows a compositional bias: polar residues. Asn52 carries an N-linked (GlcNAc...) asparagine glycan. Residues 78-127 (CSSDKECEVGRYCHSPHQGSSACMLCRRKKKRCHRDGMCCPGTRCNNGIC) form a DKK-type Cys-1 region. Cystine bridges form between Cys183–Cys195, Cys189–Cys204, Cys194–Cys231, Cys214–Cys239, and Cys233–Cys256. Positions 183–256 (CLRSSDCIDG…YSSKARLHVC (74 aa)) are DKK-type Cys-2.

This sequence belongs to the dickkopf family. As to quaternary structure, interacts with LRP5 and LRP6. In terms of processing, may be proteolytically processed by a furin-like protease.

The protein localises to the secreted. In terms of biological role, antagonizes canonical Wnt signaling by inhibiting LRP5/6 interaction with Wnt and by forming a ternary complex with the transmembrane protein KREMEN that promotes internalization of LRP5/6. DKKs play an important role in vertebrate development, where they locally inhibit Wnt regulated processes such as antero-posterior axial patterning, limb development, somitogenesis and eye formation. In the adult, Dkks are implicated in bone formation and bone disease, cancer and Alzheimer disease. In Mus musculus (Mouse), this protein is Dickkopf-related protein 2.